Reading from the N-terminus, the 231-residue chain is Enolase-phosphatase E1 (231 aa).

Belongs to the HAD-like hydrolase superfamily. MasA/MtnC family. Monomer. Mg(2+) serves as cofactor.

It carries out the reaction 5-methylsulfanyl-2,3-dioxopentyl phosphate + H2O = 1,2-dihydroxy-5-(methylsulfanyl)pent-1-en-3-one + phosphate. It participates in amino-acid biosynthesis; L-methionine biosynthesis via salvage pathway; L-methionine from S-methyl-5-thio-alpha-D-ribose 1-phosphate: step 3/6. The protein operates within amino-acid biosynthesis; L-methionine biosynthesis via salvage pathway; L-methionine from S-methyl-5-thio-alpha-D-ribose 1-phosphate: step 4/6. In terms of biological role, bifunctional enzyme that catalyzes the enolization of 2,3-diketo-5-methylthiopentyl-1-phosphate (DK-MTP-1-P) into the intermediate 2-hydroxy-3-keto-5-methylthiopentenyl-1-phosphate (HK-MTPenyl-1-P), which is then dephosphorylated to form the acireductone 1,2-dihydroxy-3-keto-5-methylthiopentene (DHK-MTPene). The chain is Enolase-phosphatase E1 from Stenotrophomonas maltophilia (strain K279a).